Here is a 2485-residue protein sequence, read N- to C-terminus: Tyrosine-protein phosphatase non-receptor type 13 (2485 aa).

One can recognise a KIND domain in the interval 3-190 (VSLAEALEVR…SGTDQLSCNS (188 aa)). The interval 186–220 (LSCNSEQKPDRSQAIRDRLRGKGLPTGRSSTSDVL) is disordered. Residues 192-205 (QKPDRSQAIRDRLR) show a composition bias toward basic and acidic residues. Serine 240 bears the Phosphoserine mark. The interval 260-283 (SDNSGREDSENTFSPYQFKTSGPE) is disordered. Over residues 270 to 279 (NTFSPYQFKT) the composition is skewed to polar residues. Phosphoserine is present on residues serine 301 and serine 302. The tract at residues 433–467 (RSEASKRFESSSGLPGVDETLSQGQSQRPSRQYET) is disordered. A compositionally biased stretch (polar residues) spans 452–465 (TLSQGQSQRPSRQY). A coiled-coil region spans residues 469 to 504 (FEGNLINQEIMLKRQEEELMQLQAKMALRQSRLSLY). The FERM domain occupies 572-872 (RKVNIMLLNG…YQHKFQLQMR (301 aa)). 5 positions are modified to phosphoserine: serine 890, serine 897, serine 908, serine 911, and serine 914. Disordered stretches follow at residues 947-975 (QNSS…DLSQ) and 995-1049 (TVAE…IEDP). Over residues 950–971 (SKEKNDKASWEEKPREMSKSYH) the composition is skewed to basic and acidic residues. Polar residues predominate over residues 1020–1032 (KLNNSKSVASLNR). Residues serine 1029, serine 1033, and serine 1085 each carry the phosphoserine modification. Residues 1033–1042 (SPERRKHESD) are compositionally biased toward basic and acidic residues. Positions 1093–1178 (LVNLKKDAKY…EDVTLVISQP (86 aa)) constitute a PDZ 1 domain. Disordered stretches follow at residues 1227-1258 (HISE…SLSQ) and 1273-1362 (TWQE…SPPK). 3 stretches are compositionally biased toward polar residues: residues 1243–1258 (SLSS…SLSQ), 1273–1288 (TWQE…SVIS), and 1327–1359 (TYSS…FSSS). PDZ domains follow at residues 1368-1452 (EVEL…LEKG) and 1501-1588 (EVKL…LCRP). Residues 1608 to 1630 (AQVLPNSSKDSSQPSCVEQSTSS) are compositionally biased toward polar residues. 2 disordered regions span residues 1608–1665 (AQVL…DLVT) and 1715–1751 (PNKP…SSMD). Residues 1736 to 1749 (QSYQPQSESASSSS) show a composition bias toward low complexity. PDZ domains follow at residues 1788–1868 (LITL…IGRV) and 1882–1965 (PDIT…ATRN). Residues 1971–1996 (PSSKRSAVSAPKSTKGNGSYSVGSCS) form a disordered region. Polar residues predominate over residues 1973 to 1996 (SKRSAVSAPKSTKGNGSYSVGSCS). Residues 2213–2467 (PSKELENLQE…IFCYQVILYV (255 aa)) enclose the Tyrosine-protein phosphatase domain. Substrate contacts are provided by residues aspartate 2378, 2408–2414 (CSAGIGR), and glutamine 2452. The Phosphocysteine intermediate role is filled by cysteine 2408. Residues 2408–2414 (CSAGIGR) are substrate.

The protein belongs to the protein-tyrosine phosphatase family. Non-receptor class subfamily. In terms of assembly, interacts (via the first PDZ domain) with PLEKHA1 and PLEKHA2. Interacts (via the second PDZ domain) with TNFRSF6 (Fas receptor) (via C-terminus). Interacts (via the second PDZ domain) with TRIP6 (via the third LIM domain and C-terminus). Interacts (via the third PDZ domain) with NGFR (via C-terminal SVP motif) and PKN2 (via C-terminus). Interacts (via the second or fourth PDZ domains) with PDLIM4 (via C-terminus only or via combined C-terminus and LIM domain, but not LIM domain only). Found in a complex with PDLIM4 and TRIP6. Interacts with PDLIM4; this interaction results in dephosphorylation of SRC 'Tyr-419' by this protein leading to its inactivation. Interacts with BRD7. Interacts with RAPGEF6. Interacts with ARHGAP29. Interacts with PIK3R2; dephosphorylates PIK3R2. Interacts with FBXL2. Interacts (via the FERM domain) with ENTR1. Found in a complex with ENTR1, PTPN13 and GIT1. In terms of tissue distribution, expressed in keratinocytes (at protein level). Present in most tissues with the exception of the liver and skeletal muscle. Most abundant in lung, kidney and fetal brain.

Its subcellular location is the cytoplasm. It localises to the cytoskeleton. The protein localises to the nucleus. The protein resides in the cell projection. It is found in the lamellipodium. It carries out the reaction O-phospho-L-tyrosyl-[protein] + H2O = L-tyrosyl-[protein] + phosphate. Tyrosine phosphatase which negatively regulates FAS-induced apoptosis and NGFR-mediated pro-apoptotic signaling. May regulate phosphoinositide 3-kinase (PI3K) signaling through dephosphorylation of PIK3R2. The chain is Tyrosine-protein phosphatase non-receptor type 13 (PTPN13) from Homo sapiens (Human).